Consider the following 49-residue polypeptide: Small integral membrane protein 27 (49 aa).

A helical transmembrane segment spans residues 11–31; the sequence is WTYSLLLLAIVLLSWGFVIYA.

The protein resides in the membrane. The protein is Small integral membrane protein 27 of Mus musculus (Mouse).